We begin with the raw amino-acid sequence, 204 residues long: Small ribosomal subunit protein uS7 (204 aa).

N-acetylmethionine is present on Met-1. The residue at position 2 (Thr-2) is an N-acetylthreonine; in 40S ribosomal protein S5, N-terminally processed. The residue at position 14 (Thr-14) is a Phosphothreonine. N6-acetyllysine; alternate is present on Lys-47. Residue Lys-47 forms a Glycyl lysine isopeptide (Lys-Gly) (interchain with G-Cter in SUMO2); alternate linkage. Ser-142 carries the post-translational modification Phosphoserine.

Belongs to the universal ribosomal protein uS7 family. In terms of assembly, component of the small ribosomal subunit. Part of the small subunit (SSU) processome, composed of more than 70 proteins and the RNA chaperone small nucleolar RNA (snoRNA) U3.

Its subcellular location is the cytoplasm. It localises to the nucleus. It is found in the nucleolus. Its function is as follows. Component of the small ribosomal subunit. The ribosome is a large ribonucleoprotein complex responsible for the synthesis of proteins in the cell. Part of the small subunit (SSU) processome, first precursor of the small eukaryotic ribosomal subunit. During the assembly of the SSU processome in the nucleolus, many ribosome biogenesis factors, an RNA chaperone and ribosomal proteins associate with the nascent pre-rRNA and work in concert to generate RNA folding, modifications, rearrangements and cleavage as well as targeted degradation of pre-ribosomal RNA by the RNA exosome. In Mus musculus (Mouse), this protein is Small ribosomal subunit protein uS7 (Rps5).